The following is a 91-amino-acid chain: MPRSLKKGPFLDLHLLKKVEKAVESGDKKPIKTWSRRSMIIPSMIGLTIAVHNGRQHVPVYVSDEMIGHKLGEFAPTRTYRGHAADKKAKK.

Belongs to the universal ribosomal protein uS19 family.

Its function is as follows. Protein S19 forms a complex with S13 that binds strongly to the 16S ribosomal RNA. The sequence is that of Small ribosomal subunit protein uS19 from Actinobacillus pleuropneumoniae serotype 7 (strain AP76).